We begin with the raw amino-acid sequence, 176 residues long: Mitochondrial inner membrane protein Mpv17 (176 aa).

Helical transmembrane passes span V18–V38, T53–L73, G94–L114, and L131–L151.

It belongs to the peroxisomal membrane protein PXMP2/4 family.

The protein resides in the mitochondrion inner membrane. Non-selective channel that modulates the membrane potential under normal conditions and oxidative stress, and is involved in mitochondrial homeostasis. Involved in mitochondrial deoxynucleoside triphosphates (dNTP) pool homeostasis and mitochondrial DNA (mtDNA) maintenance. May be involved in the regulation of reactive oxygen species metabolism and the control of oxidative phosphorylation. This chain is Mitochondrial inner membrane protein Mpv17, found in Bos taurus (Bovine).